The sequence spans 494 residues: Tetracenomycin biosynthesis bifunctional cyclase/O-methyl transferase TcmN (494 aa).

The interval 11–140 is polyketide cyclase; that stretch reads VNAPFELVWD…TTTRANMERI (130 aa). The active-site Proton acceptor; for cyclase activity is S67. Active-site proton donor; for cyclase activity residues include R69 and R82. The tract at residues 169–494 is methyltransferase; that stretch reads LLLAASGRLA…TWTTLECRPV (326 aa). S-adenosyl-L-methionine contacts are provided by residues D358 and 384-386; that span reads GDF. Residue H405 is the Proton acceptor; for methyltransferase activity of the active site.

In the C-terminal section; belongs to the class I-like SAM-binding methyltransferase superfamily. Cation-independent O-methyltransferase family. The tetracenomycin polyketide synthase (TCM PKS) is composed of a ketosynthase complex (TcmKL), an acyl carrier protein (TcmM), a cyclase (TcmN) and a probable second cyclase (TcmJ). TcmN is a homodimer in solution.

The enzyme catalyses 10 malonyl-CoA + 8 H(+) = tetracenomycin F2 + 10 CO2 + 10 CoA + 2 H2O. It participates in antibiotic biosynthesis; tetracenomycin C biosynthesis. In terms of biological role, involved in the biosynthesis of tetracenomycin C (TCM C). Part of a type II polyketide synthase (PKS) that catalyzes the synthesis of tetracenomycin F2 (TCM F2), a precursor of TCM C, from malonyl-CoA. The TcmN N-terminal domain, when coupled with the other components of the PKS, catalyzes the cyclization and aromatization of the linear polyketide intermediate. Catalyzes the cyclization of the first and second rings. In addition, the C-terminal domain acts as a methyltransferase. It catalyzes the specific O-methylation of tetracenomycin D3 (TCM D3) to TCM B3, using S-adenosyl-L-methionine as the methyl donor. The polypeptide is Tetracenomycin biosynthesis bifunctional cyclase/O-methyl transferase TcmN (Streptomyces glaucescens).